A 198-amino-acid polypeptide reads, in one-letter code: dITP/XTP pyrophosphatase (198 aa).

10–15 (SGSDHK) is a binding site for substrate. Residues Glu-43 and Asp-72 each coordinate Mg(2+). The Proton acceptor role is filled by Asp-72. Substrate-binding positions include Ser-73, 154–157 (FGYD), Lys-177, and 182–183 (HR).

This sequence belongs to the HAM1 NTPase family. In terms of assembly, homodimer. The cofactor is Mg(2+).

The enzyme catalyses XTP + H2O = XMP + diphosphate + H(+). It carries out the reaction dITP + H2O = dIMP + diphosphate + H(+). The catalysed reaction is ITP + H2O = IMP + diphosphate + H(+). Pyrophosphatase that catalyzes the hydrolysis of nucleoside triphosphates to their monophosphate derivatives, with a high preference for the non-canonical purine nucleotides XTP (xanthosine triphosphate), dITP (deoxyinosine triphosphate) and ITP. Seems to function as a house-cleaning enzyme that removes non-canonical purine nucleotides from the nucleotide pool, thus preventing their incorporation into DNA/RNA and avoiding chromosomal lesions. The chain is dITP/XTP pyrophosphatase from Leptospira biflexa serovar Patoc (strain Patoc 1 / Ames).